Reading from the N-terminus, the 144-residue chain is AP-4 complex subunit sigma-1 (144 aa).

Belongs to the adaptor complexes small subunit family. Adaptor protein complex 4 (AP-4) is a heterotetramer composed of two large adaptins (epsilon-type subunit AP4E1 and beta-type subunit AP4B1), a medium adaptin (mu-type subunit AP4M1) and a small adaptin (sigma-type AP4S1). Widely expressed.

The protein resides in the golgi apparatus. It localises to the trans-Golgi network membrane. Its function is as follows. Component of the adaptor protein complex 4 (AP-4). Adaptor protein complexes are vesicle coat components involved both in vesicle formation and cargo selection. They control the vesicular transport of proteins in different trafficking pathways. AP-4 forms a non clathrin-associated coat on vesicles departing the trans-Golgi network (TGN) and may be involved in the targeting of proteins from the trans-Golgi network (TGN) to the endosomal-lysosomal system. It is also involved in protein sorting to the basolateral membrane in epithelial cells and the proper asymmetric localization of somatodendritic proteins in neurons. AP-4 is involved in the recognition and binding of tyrosine-based sorting signals found in the cytoplasmic part of cargos, but may also recognize other types of sorting signal. The sequence is that of AP-4 complex subunit sigma-1 from Homo sapiens (Human).